The sequence spans 227 residues: Adenylate kinase (227 aa).

Residue 21–26 (GAGKGT) participates in ATP binding. The tract at residues 41 to 70 (ATGDMLRSQVAKQTPLGIEAKKIMDDGKLV) is NMP. Residues T42, R47, 68-70 (KLV), 97-100 (GFPR), and Q104 contribute to the AMP site. The interval 138-175 (GRLVHPASGRSYHKVFNPPKTEMKDDITGEDLVQRSDD) is LID. ATP-binding positions include R139 and 148–149 (SY). AMP-binding residues include R172 and R183. Residue Q211 coordinates ATP.

It belongs to the adenylate kinase family. AK2 subfamily. Monomer.

The protein localises to the cytoplasm. The protein resides in the cytosol. It localises to the mitochondrion intermembrane space. The enzyme catalyses AMP + ATP = 2 ADP. In terms of biological role, catalyzes the reversible transfer of the terminal phosphate group between ATP and AMP. Plays an important role in cellular energy homeostasis and in adenine nucleotide metabolism. Adenylate kinase activity is critical for regulation of the phosphate utilization and the AMP de novo biosynthesis pathways. This Kluyveromyces lactis (strain ATCC 8585 / CBS 2359 / DSM 70799 / NBRC 1267 / NRRL Y-1140 / WM37) (Yeast) protein is Adenylate kinase.